Here is a 348-residue protein sequence, read N- to C-terminus: Uroporphyrinogen decarboxylase (348 aa).

Substrate-binding positions include R27–R31, F46, D76, Y152, S207, and H320.

The protein belongs to the uroporphyrinogen decarboxylase family. Homodimer.

It is found in the cytoplasm. The enzyme catalyses uroporphyrinogen III + 4 H(+) = coproporphyrinogen III + 4 CO2. The protein operates within porphyrin-containing compound metabolism; protoporphyrin-IX biosynthesis; coproporphyrinogen-III from 5-aminolevulinate: step 4/4. Its function is as follows. Catalyzes the decarboxylation of four acetate groups of uroporphyrinogen-III to yield coproporphyrinogen-III. This Bacillus thuringiensis (strain Al Hakam) protein is Uroporphyrinogen decarboxylase.